The chain runs to 507 residues: Sterol 14-alpha demethylase CYP51A (507 aa).

The helical transmembrane segment at 7–29 (YPLWVLVALFAVIIANLLYQQLP) threads the bilayer. Residue Y105 coordinates lanosterol. C449 contacts heme.

It belongs to the cytochrome P450 family. Heme serves as cofactor.

It localises to the endoplasmic reticulum membrane. It catalyses the reaction a 14alpha-methyl steroid + 3 reduced [NADPH--hemoprotein reductase] + 3 O2 = a Delta(14) steroid + formate + 3 oxidized [NADPH--hemoprotein reductase] + 4 H2O + 4 H(+). The catalysed reaction is a 14alpha-methyl steroid + reduced [NADPH--hemoprotein reductase] + O2 = a 14alpha-hydroxymethyl steroid + oxidized [NADPH--hemoprotein reductase] + H2O + H(+). It carries out the reaction a 14alpha-hydroxymethyl steroid + reduced [NADPH--hemoprotein reductase] + O2 = a 14alpha-formyl steroid + oxidized [NADPH--hemoprotein reductase] + 2 H2O + H(+). The enzyme catalyses a 14alpha-formyl steroid + reduced [NADPH--hemoprotein reductase] + O2 = a Delta(14) steroid + formate + oxidized [NADPH--hemoprotein reductase] + H2O + 2 H(+). It catalyses the reaction lanosterol + 3 reduced [NADPH--hemoprotein reductase] + 3 O2 = 4,4-dimethyl-5alpha-cholesta-8,14,24-trien-3beta-ol + formate + 3 oxidized [NADPH--hemoprotein reductase] + 4 H2O + 4 H(+). The catalysed reaction is lanosterol + reduced [NADPH--hemoprotein reductase] + O2 = 32-hydroxylanosterol + oxidized [NADPH--hemoprotein reductase] + H2O + H(+). It carries out the reaction 32-hydroxylanosterol + reduced [NADPH--hemoprotein reductase] + O2 = 32-oxolanosterol + oxidized [NADPH--hemoprotein reductase] + 2 H2O + H(+). The enzyme catalyses 32-oxolanosterol + reduced [NADPH--hemoprotein reductase] + O2 = 4,4-dimethyl-5alpha-cholesta-8,14,24-trien-3beta-ol + formate + oxidized [NADPH--hemoprotein reductase] + H2O + 2 H(+). It catalyses the reaction eburicol + 3 reduced [NADPH--hemoprotein reductase] + 3 O2 = 14-demethyleburicol + formate + 3 oxidized [NADPH--hemoprotein reductase] + 4 H2O + 4 H(+). The catalysed reaction is eburicol + reduced [NADPH--hemoprotein reductase] + O2 = 32-hydroxyeburicol + oxidized [NADPH--hemoprotein reductase] + H2O + H(+). It carries out the reaction 32-hydroxyeburicol + reduced [NADPH--hemoprotein reductase] + O2 = 32-oxoeburicol + oxidized [NADPH--hemoprotein reductase] + 2 H2O + H(+). The enzyme catalyses 32-oxoeburicol + reduced [NADPH--hemoprotein reductase] + O2 = 14-demethyleburicol + formate + oxidized [NADPH--hemoprotein reductase] + H2O + 2 H(+). It functions in the pathway steroid metabolism; ergosterol biosynthesis. Functionally, together with cyp51B and cyp51C, encodes the sterol 14alpha-demethylase that plays a critical role in the third module of ergosterol biosynthesis pathway, being ergosterol the major sterol component in fungal membranes that participates in a variety of functions. CYP51A encodes the sterol 14-alpha-demethylase induced on ergosterol depletion and is responsible for the intrinsic variation in azole sensitivity. The third module or late pathway involves the ergosterol synthesis itself through consecutive reactions that mainly occur in the endoplasmic reticulum (ER) membrane. In filamentous fungi, during the initial step of this module, lanosterol (lanosta-8,24-dien-3beta-ol) can be metabolized to eburicol. Sterol 14alpha-demethylase catalyzes the three-step oxidative removal of the 14alpha-methyl group (C-32) of both these sterols in the form of formate, and converts eburicol and lanosterol to 14-demethyleburicol (4,4,24-trimethylergosta-8,14,24(28)-trienol) and 4,4-dimethyl-5alpha-cholesta-8,14,24-trien-3beta-ol, respectively, which are further metabolized by other enzymes in the pathway to ergosterol. Can also use substrates not intrinsic to fungi, such as 24,25-dihydrolanosterol (DHL), producing 4,4'-dimethyl-8,14-cholestadien-3-beta-ol, but at lower rates than the endogenous substrates. This Gibberella zeae (strain ATCC MYA-4620 / CBS 123657 / FGSC 9075 / NRRL 31084 / PH-1) (Wheat head blight fungus) protein is Sterol 14-alpha demethylase CYP51A.